The primary structure comprises 414 residues: 5-aminolevulinate synthase (414 aa).

Substrate-binding residues include R22, S133, and K152. Residues S185, H213, and T241 each coordinate pyridoxal 5'-phosphate. K244 is a catalytic residue. Position 244 is an N6-(pyridoxal phosphate)lysine (K244). Pyridoxal 5'-phosphate contacts are provided by T273 and T274. T359 is a substrate binding site.

It belongs to the class-II pyridoxal-phosphate-dependent aminotransferase family. As to quaternary structure, homodimer. Requires pyridoxal 5'-phosphate as cofactor.

The enzyme catalyses succinyl-CoA + glycine + H(+) = 5-aminolevulinate + CO2 + CoA. Its pathway is porphyrin-containing compound metabolism; protoporphyrin-IX biosynthesis; 5-aminolevulinate from glycine: step 1/1. In Rickettsia felis (strain ATCC VR-1525 / URRWXCal2) (Rickettsia azadi), this protein is 5-aminolevulinate synthase (hemA).